A 128-amino-acid chain; its full sequence is Small ribosomal subunit protein uS9 (128 aa).

The segment covering 97–113 (RSEGFMTRDPRSVERKK) has biased composition (basic and acidic residues). The disordered stretch occupies residues 97–128 (RSEGFMTRDPRSVERKKPGQPKARRRFQFSKR). The span at 114–128 (PGQPKARRRFQFSKR) shows a compositional bias: basic residues.

This sequence belongs to the universal ribosomal protein uS9 family.

This chain is Small ribosomal subunit protein uS9, found in Bacteroides fragilis (strain ATCC 25285 / DSM 2151 / CCUG 4856 / JCM 11019 / LMG 10263 / NCTC 9343 / Onslow / VPI 2553 / EN-2).